A 558-amino-acid polypeptide reads, in one-letter code: Formate--tetrahydrofolate ligase 2 (558 aa).

67-74 contributes to the ATP binding site; it reads TPAGEGKT.

Belongs to the formate--tetrahydrofolate ligase family.

The catalysed reaction is (6S)-5,6,7,8-tetrahydrofolate + formate + ATP = (6R)-10-formyltetrahydrofolate + ADP + phosphate. The protein operates within one-carbon metabolism; tetrahydrofolate interconversion. This is Formate--tetrahydrofolate ligase 2 from Desulfitobacterium hafniense (strain Y51).